The chain runs to 228 residues: L-ribulose-5-phosphate 4-epimerase UlaF (228 aa).

Substrate is bound by residues 26–27 (GN), 43–44 (SG), and 72–73 (SS). Zn(2+)-binding residues include D74, H93, and H95. D118 functions as the Proton donor/acceptor in the catalytic mechanism. H167 lines the Zn(2+) pocket. Y225 acts as the Proton donor/acceptor in catalysis.

Belongs to the aldolase class II family. AraD/FucA subfamily. It depends on Zn(2+) as a cofactor.

The catalysed reaction is L-ribulose 5-phosphate = D-xylulose 5-phosphate. It participates in cofactor degradation; L-ascorbate degradation; D-xylulose 5-phosphate from L-ascorbate: step 4/4. Functionally, catalyzes the isomerization of L-ribulose 5-phosphate to D-xylulose 5-phosphate. Is involved in the anaerobic L-ascorbate utilization. The chain is L-ribulose-5-phosphate 4-epimerase UlaF from Escherichia coli O81 (strain ED1a).